Reading from the N-terminus, the 311-residue chain is Lipoyl synthase (311 aa).

[4Fe-4S] cluster is bound by residues Cys47, Cys52, Cys58, Cys73, Cys77, Cys80, and Ser286. The 218-residue stretch at 59-276 folds into the Radical SAM core domain; that stretch reads WSRHTATYLA…RSVGESLGLF (218 aa).

It belongs to the radical SAM superfamily. Lipoyl synthase family. Requires [4Fe-4S] cluster as cofactor.

Its subcellular location is the cytoplasm. The catalysed reaction is [[Fe-S] cluster scaffold protein carrying a second [4Fe-4S](2+) cluster] + N(6)-octanoyl-L-lysyl-[protein] + 2 oxidized [2Fe-2S]-[ferredoxin] + 2 S-adenosyl-L-methionine + 4 H(+) = [[Fe-S] cluster scaffold protein] + N(6)-[(R)-dihydrolipoyl]-L-lysyl-[protein] + 4 Fe(3+) + 2 hydrogen sulfide + 2 5'-deoxyadenosine + 2 L-methionine + 2 reduced [2Fe-2S]-[ferredoxin]. Its pathway is protein modification; protein lipoylation via endogenous pathway; protein N(6)-(lipoyl)lysine from octanoyl-[acyl-carrier-protein]: step 2/2. Functionally, catalyzes the radical-mediated insertion of two sulfur atoms into the C-6 and C-8 positions of the octanoyl moiety bound to the lipoyl domains of lipoate-dependent enzymes, thereby converting the octanoylated domains into lipoylated derivatives. This is Lipoyl synthase from Chlamydia trachomatis serovar D (strain ATCC VR-885 / DSM 19411 / UW-3/Cx).